The following is a 338-amino-acid chain: MPIKHAIVHLIEKKPDGTPAVLHARDAELGDSQAIENLLADLNESYNAKNKAWGFFQGESGAYPFSGWLGEYLEGDRDFVGFSREAVEHLQKLMEESNLSTGGHVLFAHYQQGMTDYLAIALLHHSEGVAVNESLEVTPSRHLDLGQLHLAARINISEWRNNKQSKQYISFIKGKGGRKVSDYFRDFIGCQEGVDSPSETRTLLKAFSDFVESEDMAEEQAREKTETLVDYATSQARIGEPMTLDALSELMDDQQPRAFYDYIRNKDYGLSPEIPADKRTLNQFRRFTGRAEGLSISFEAHLLGSRIEYDEERDTLQISSLPTQLRDQLKRRKAQIGE.

The protein belongs to the YejK family.

It localises to the cytoplasm. The protein localises to the nucleoid. This Pseudomonas aeruginosa (strain UCBPP-PA14) protein is Nucleoid-associated protein PA14_59050.